Reading from the N-terminus, the 512-residue chain is Probable cytosol aminopeptidase (512 aa).

Lysine 281 and aspartate 286 together coordinate Mn(2+). The active site involves lysine 293. Mn(2+) is bound by residues aspartate 304, aspartate 363, and glutamate 365. Residue arginine 367 is part of the active site.

The protein belongs to the peptidase M17 family. Requires Mn(2+) as cofactor.

The protein localises to the cytoplasm. The enzyme catalyses Release of an N-terminal amino acid, Xaa-|-Yaa-, in which Xaa is preferably Leu, but may be other amino acids including Pro although not Arg or Lys, and Yaa may be Pro. Amino acid amides and methyl esters are also readily hydrolyzed, but rates on arylamides are exceedingly low.. It carries out the reaction Release of an N-terminal amino acid, preferentially leucine, but not glutamic or aspartic acids.. Its function is as follows. Presumably involved in the processing and regular turnover of intracellular proteins. Catalyzes the removal of unsubstituted N-terminal amino acids from various peptides. The sequence is that of Probable cytosol aminopeptidase from Koribacter versatilis (strain Ellin345).